A 112-amino-acid polypeptide reads, in one-letter code: Ribosome-binding factor A (112 aa).

Belongs to the RbfA family. Monomer. Binds 30S ribosomal subunits, but not 50S ribosomal subunits or 70S ribosomes.

The protein resides in the cytoplasm. Its function is as follows. One of several proteins that assist in the late maturation steps of the functional core of the 30S ribosomal subunit. Associates with free 30S ribosomal subunits (but not with 30S subunits that are part of 70S ribosomes or polysomes). Required for efficient processing of 16S rRNA. May interact with the 5'-terminal helix region of 16S rRNA. In Mycoplasma genitalium (strain ATCC 33530 / DSM 19775 / NCTC 10195 / G37) (Mycoplasmoides genitalium), this protein is Ribosome-binding factor A.